Reading from the N-terminus, the 618-residue chain is Paraneoplastic antigen-like protein 5 (618 aa).

Residues 390–399 are compositionally biased toward basic and acidic residues; sequence AGEEGQRKES. Disordered regions lie at residues 390 to 409, 451 to 475, and 519 to 549; these read AGEE…EPDE, RDTL…EGQQ, and SMIT…ELRM.

It belongs to the PNMA family. As to expression, restricted to testis, where expression is low. Not detected in the brain.

The protein localises to the nucleus. This Mus musculus (Mouse) protein is Paraneoplastic antigen-like protein 5 (Pnma5).